A 145-amino-acid chain; its full sequence is Putative antiporter subunit mnhG2 (145 aa).

3 helical membrane passes run 11–31, 51–71, and 72–92; these read IAAV…IGIV, VLLT…FFSV, and RLLL…HLVA.

The protein belongs to the CPA3 antiporters (TC 2.A.63) subunit G family. May form a heterooligomeric complex that consists of seven subunits: mnhA2, mnhB2, mnhC2, mnhD2, mnhE2, mnhF2 and mnhG2.

It is found in the cell membrane. This is Putative antiporter subunit mnhG2 (mnhG2) from Staphylococcus aureus (strain COL).